The chain runs to 431 residues: Divergent protein kinase domain 1B (431 aa).

The Cytoplasmic portion of the chain corresponds to 1–30 (MRRLRRLVHLVLLCPFSKGLQGRLPGLRVK). The May mediate ER retention signature appears at 5–6 (RR). Residues 31-51 (YVLLVWLGIFVGSWMVYVHYS) traverse the membrane as a helical segment. At 52–431 (SYSELCRGHV…WREISNTNYS (380 aa)) the chain is on the lumenal side. Intrachain disulfides connect cysteine 57–cysteine 94 and cysteine 62–cysteine 117.

This sequence belongs to the DIPK family. Among the many cysteines in the lumenal domain, most are probably involved in disulfide bonds.

It is found in the endoplasmic reticulum membrane. In Rattus norvegicus (Rat), this protein is Divergent protein kinase domain 1B.